Reading from the N-terminus, the 568-residue chain is uncharacterized protein (568 aa).

Residues 334 to 346 (DDNEEKNNDRPKI) are compositionally biased toward basic and acidic residues. 2 disordered regions span residues 334–382 (DDNE…NDQN) and 436–479 (QVEE…SCKN). Residues 458 to 477 (KIASSASKNDNSNNKNSKSC) show a composition bias toward low complexity.

The protein to yeast YJL043w.

This is an uncharacterized protein from Saccharomyces cerevisiae (strain ATCC 204508 / S288c) (Baker's yeast).